A 146-amino-acid polypeptide reads, in one-letter code: Hemoglobin subunit beta (146 aa).

N-acetylvaline is present on Val1. A Globin domain is found at 2–146 (HLTGEEKTAV…VANALAHKYH (145 aa)). Thr12 carries the post-translational modification Phosphothreonine. The residue at position 44 (Ser44) is a Phosphoserine. The residue at position 59 (Lys59) is an N6-acetyllysine. Residue His63 coordinates heme b. Lys82 carries the N6-acetyllysine modification. His92 contacts heme b. Cys93 carries the post-translational modification S-nitrosocysteine. Lys144 bears the N6-acetyllysine mark.

The protein belongs to the globin family. Heterotetramer of two alpha chains and two beta chains. In terms of tissue distribution, red blood cells.

In terms of biological role, involved in oxygen transport from the lung to the various peripheral tissues. The chain is Hemoglobin subunit beta (HBB) from Nasua nasua (Ring-tailed coati).